The sequence spans 199 residues: Chaperone protein TorD (199 aa).

The protein belongs to the TorD/DmsD family. TorD subfamily.

The protein resides in the cytoplasm. Functionally, involved in the biogenesis of TorA. Acts on TorA before the insertion of the molybdenum cofactor and, as a result, probably favors a conformation of the apoenzyme that is competent for acquiring the cofactor. The polypeptide is Chaperone protein TorD (Escherichia coli O157:H7 (strain EC4115 / EHEC)).